Here is a 351-residue protein sequence, read N- to C-terminus: Large ribosomal subunit protein uL3 (351 aa).

Disordered stretches follow at residues 1-31 and 246-271; these read MGHR…TPRT and KGSR…GQLG.

It belongs to the universal ribosomal protein uL3 family. Part of the 50S ribosomal subunit. Forms a cluster with proteins L14 and L24e.

One of the primary rRNA binding proteins, it binds directly near the 3'-end of the 23S rRNA, where it nucleates assembly of the 50S subunit. The chain is Large ribosomal subunit protein uL3 from Saccharolobus islandicus (strain Y.N.15.51 / Yellowstone #2) (Sulfolobus islandicus).